Here is a 255-residue protein sequence, read N- to C-terminus: Small ribosomal subunit protein uS2 (255 aa).

Residues 231 to 255 (RLQTGAEEEFSTEGEEVVEETPAEA) are disordered. Over residues 236–255 (AEEEFSTEGEEVVEETPAEA) the composition is skewed to acidic residues.

This sequence belongs to the universal ribosomal protein uS2 family.

This is Small ribosomal subunit protein uS2 from Geobacter sp. (strain M21).